Reading from the N-terminus, the 178-residue chain is CD209 antigen-like protein C (178 aa).

C48 and C59 are disulfide-bonded. In terms of domain architecture, C-type lectin spans 54 to 169 (VFQGNCYFFS…CTIKKYWICK (116 aa)). Residue N70 is glycosylated (N-linked (GlcNAc...) asparagine). Intrachain disulfides connect C76–C168 and C147–C160. The Ca(2+) site is built by E138, N140, E145, N156, and D157.

Probable pathogen-recognition receptor. May recognize in a calcium-dependent manner high mannose N-linked oligosaccharides in a variety of pathogen antigens. The chain is CD209 antigen-like protein C (Cd209c) from Mus musculus (Mouse).